We begin with the raw amino-acid sequence, 703 residues long: Protein teflon (703 aa).

The segment at 32–55 (MFCHFCKDIFTHLPEFMRHLQWSH) adopts a C2H2-type 1 zinc-finger fold. Disordered regions lie at residues 78-111 (TSEDDVQSQANSCSSGDSGLAGEMEDADGEPGSS), 138-161 (SHEQSYSKTPPDSRTEGFRCARKP), and 339-434 (SQQP…SKLE). 2 stretches are compositionally biased toward polar residues: residues 84 to 94 (QSQANSCSSGD) and 138 to 147 (SHEQSYSKTP). The segment covering 148 to 161 (PDSRTEGFRCARKP) has biased composition (basic and acidic residues). Composition is skewed to polar residues over residues 339-352 (SQQPSELNTTNNAV) and 364-373 (SLTVISSSPI). C2H2-type zinc fingers lie at residues 649-672 (YFCECCEEIFPNEARYKKHVQSVH) and 677-700 (FTCSECGKSFKRLYFYEKHLKTVH).

This sequence belongs to the Teflon family.

The protein resides in the nucleus. It is found in the chromosome. Specifically required in males for proper segregation of autosomal bivalents at meiosis I. Expression is required in the male germ line prior to spermatocyte stage S4. May have a role as a bridging molecule maintaining adhesion to hold autosome bivalents together via heterochromatic connections. This chain is Protein teflon, found in Drosophila pseudoobscura pseudoobscura (Fruit fly).